The following is a 187-amino-acid chain: dCTP deaminase, dUMP-forming (187 aa).

Residues 99–104 (KSSIAR), aspartate 117, 125–127 (TLE), glutamine 146, tyrosine 159, lysine 166, and glutamine 170 contribute to the dCTP site. Glutamate 127 (proton donor/acceptor) is an active-site residue.

The protein belongs to the dCTP deaminase family. Homotrimer.

The catalysed reaction is dCTP + 2 H2O = dUMP + NH4(+) + diphosphate. Its pathway is pyrimidine metabolism; dUMP biosynthesis; dUMP from dCTP: step 1/1. Functionally, bifunctional enzyme that catalyzes both the deamination of dCTP to dUTP and the hydrolysis of dUTP to dUMP without releasing the toxic dUTP intermediate. The chain is dCTP deaminase, dUMP-forming from Methanoculleus marisnigri (strain ATCC 35101 / DSM 1498 / JR1).